The primary structure comprises 165 residues: Cyclic pyranopterin monophosphate synthase (165 aa).

Substrate contacts are provided by residues 76–78 (LCH) and 114–115 (ME). D129 is an active-site residue.

The protein belongs to the MoaC family. Homohexamer; trimer of dimers.

It carries out the reaction (8S)-3',8-cyclo-7,8-dihydroguanosine 5'-triphosphate = cyclic pyranopterin phosphate + diphosphate. Its pathway is cofactor biosynthesis; molybdopterin biosynthesis. Its function is as follows. Catalyzes the conversion of (8S)-3',8-cyclo-7,8-dihydroguanosine 5'-triphosphate to cyclic pyranopterin monophosphate (cPMP). This chain is Cyclic pyranopterin monophosphate synthase, found in Brucella abortus (strain 2308).